We begin with the raw amino-acid sequence, 157 residues long: Mini-ribonuclease 3 (157 aa).

Aspartate 18 is a catalytic residue. The interval 126 to 157 (EEDEGKGKGETAKEEESITDALSPAEQSEIDC) is disordered. The span at 130-141 (GKGKGETAKEEE) shows a compositional bias: basic and acidic residues.

The protein belongs to the MrnC RNase family. As to quaternary structure, homodimer. Requires Mg(2+) as cofactor.

The protein resides in the cytoplasm. Its function is as follows. Involved in correct processing of both the 5' and 3' ends of 23S rRNA precursor. Processes 30S rRNA precursor transcript even in absence of ribonuclease 3 (Rnc); Rnc processes 30S rRNA into smaller rRNA precursors. This chain is Mini-ribonuclease 3, found in Desulfitobacterium hafniense (strain Y51).